Consider the following 407-residue polypeptide: Imidazolonepropionase (407 aa).

Residues histidine 68 and histidine 70 each contribute to the Fe(3+) site. 2 residues coordinate Zn(2+): histidine 68 and histidine 70. 3 residues coordinate 4-imidazolone-5-propanoate: arginine 77, tyrosine 140, and histidine 173. Residue tyrosine 140 participates in N-formimidoyl-L-glutamate binding. A Fe(3+)-binding site is contributed by histidine 238. Histidine 238 serves as a coordination point for Zn(2+). Position 241 (glutamine 241) interacts with 4-imidazolone-5-propanoate. Aspartate 313 contacts Fe(3+). Zn(2+) is bound at residue aspartate 313. Positions 315 and 317 each coordinate N-formimidoyl-L-glutamate. Position 318 (threonine 318) interacts with 4-imidazolone-5-propanoate.

This sequence belongs to the metallo-dependent hydrolases superfamily. HutI family. It depends on Zn(2+) as a cofactor. Requires Fe(3+) as cofactor.

It localises to the cytoplasm. It carries out the reaction 4-imidazolone-5-propanoate + H2O = N-formimidoyl-L-glutamate. It functions in the pathway amino-acid degradation; L-histidine degradation into L-glutamate; N-formimidoyl-L-glutamate from L-histidine: step 3/3. Functionally, catalyzes the hydrolytic cleavage of the carbon-nitrogen bond in imidazolone-5-propanoate to yield N-formimidoyl-L-glutamate. It is the third step in the universal histidine degradation pathway. The chain is Imidazolonepropionase from Burkholderia orbicola (strain MC0-3).